The chain runs to 918 residues: Probable lipoxygenase 6 (918 aa).

The segment at 56-76 is disordered; sequence AASPSSGIKGGGAGERRPAPE. Residues 90-218 form the PLAT domain; sequence QKEDIKEAVA…ELPTKRVFFS (129 aa). A Lipoxygenase domain is found at 221–918; the sequence is PYLPSETPPG…CRGVPNSISI (698 aa). Residues histidine 573, histidine 578, histidine 765, asparagine 769, and isoleucine 918 each coordinate Fe cation.

Belongs to the lipoxygenase family. The cofactor is Fe cation.

It catalyses the reaction (9Z,12Z)-octadecadienoate + O2 = (13S)-hydroperoxy-(9Z,11E)-octadecadienoate. It carries out the reaction (9Z,12Z,15Z)-octadecatrienoate + O2 = (13S)-hydroperoxy-(9Z,11E,15Z)-octadecatrienoate. It participates in lipid metabolism; oxylipin biosynthesis. Plant lipoxygenase may be involved in a number of diverse aspects of plant physiology including growth and development, pest resistance, and senescence or responses to wounding. Catalyzes the hydroperoxidation of lipids containing a cis,cis-1,4-pentadiene structure. The sequence is that of Probable lipoxygenase 6 from Oryza sativa subsp. japonica (Rice).